A 24-amino-acid chain; its full sequence is Brevinin-1Ra (24 aa).

The cysteines at positions 18 and 24 are disulfide-linked.

Expressed by the skin glands.

It is found in the secreted. Antimicrobial peptide. The sequence is that of Brevinin-1Ra from Pelophylax ridibundus (Marsh frog).